The primary structure comprises 212 residues: Imidazole glycerol phosphate synthase subunit HisH (212 aa).

The Glutamine amidotransferase type-1 domain maps to 1 to 211 (MIGVIDYGMG…KQFTQEQKVK (211 aa)). The active-site Nucleophile is the C79. Active-site residues include H186 and E188.

Heterodimer of HisH and HisF.

The protein resides in the cytoplasm. It carries out the reaction 5-[(5-phospho-1-deoxy-D-ribulos-1-ylimino)methylamino]-1-(5-phospho-beta-D-ribosyl)imidazole-4-carboxamide + L-glutamine = D-erythro-1-(imidazol-4-yl)glycerol 3-phosphate + 5-amino-1-(5-phospho-beta-D-ribosyl)imidazole-4-carboxamide + L-glutamate + H(+). It catalyses the reaction L-glutamine + H2O = L-glutamate + NH4(+). It participates in amino-acid biosynthesis; L-histidine biosynthesis; L-histidine from 5-phospho-alpha-D-ribose 1-diphosphate: step 5/9. IGPS catalyzes the conversion of PRFAR and glutamine to IGP, AICAR and glutamate. The HisH subunit catalyzes the hydrolysis of glutamine to glutamate and ammonia as part of the synthesis of IGP and AICAR. The resulting ammonia molecule is channeled to the active site of HisF. The protein is Imidazole glycerol phosphate synthase subunit HisH of Bacillus licheniformis (strain ATCC 14580 / DSM 13 / JCM 2505 / CCUG 7422 / NBRC 12200 / NCIMB 9375 / NCTC 10341 / NRRL NRS-1264 / Gibson 46).